Reading from the N-terminus, the 55-residue chain is Bowman-Birk type proteinase inhibitor B1 (55 aa).

4 disulfide bridges follow: Cys-6–Cys-53, Cys-12–Cys-17, Cys-26–Cys-33, and Cys-30–Cys-45.

Belongs to the Bowman-Birk serine protease inhibitor family. As to expression, expressed in bulb (at protein level).

In terms of biological role, serine protease inhibitor. Weakly inhibits trypsin (Ki = 167 nM). Does not inhibit bacterial subtilisin or mamallian chymotrypsin. The sequence is that of Bowman-Birk type proteinase inhibitor B1 from Hyacinthus orientalis (Common hyacinth).